Here is a 273-residue protein sequence, read N- to C-terminus: Shikimate dehydrogenase (NADP(+)) (273 aa).

Shikimate is bound by residues 15-17 (SQS) and Thr-62. Lys-66 acts as the Proton acceptor in catalysis. Residue Glu-78 participates in NADP(+) binding. 2 residues coordinate shikimate: Asn-87 and Asp-102. NADP(+) contacts are provided by residues 127 to 131 (GAGGA), 151 to 156 (NRTVTK), and Met-215. Tyr-217 contacts shikimate. Gly-239 lines the NADP(+) pocket.

It belongs to the shikimate dehydrogenase family. Homodimer.

The enzyme catalyses shikimate + NADP(+) = 3-dehydroshikimate + NADPH + H(+). Its pathway is metabolic intermediate biosynthesis; chorismate biosynthesis; chorismate from D-erythrose 4-phosphate and phosphoenolpyruvate: step 4/7. In terms of biological role, involved in the biosynthesis of the chorismate, which leads to the biosynthesis of aromatic amino acids. Catalyzes the reversible NADPH linked reduction of 3-dehydroshikimate (DHSA) to yield shikimate (SA). The sequence is that of Shikimate dehydrogenase (NADP(+)) from Laribacter hongkongensis (strain HLHK9).